Here is a 576-residue protein sequence, read N- to C-terminus: MNIFNQLKQDIIAASRQLYNNQEIANIVTIETSKDNFNGDLSSNIAMIIAAKENMPPRTVALKFKEILITLPYIASIEIAGPGFINFTIKAESWQIAIKNILQHEGKFFEIDIDKNKYINIEYVSANPTGPMHIGHARGAVYGDVLARILQKVGYNVTKEYYVNDAGSQINDLVSTVLLRYREALGEKITIPVGLYPGEYLIPVGQILVKEYGNKLLVMDEEERFKIVKNFAVEKMLDLNRKDLEELGIKHDLFFSEQSLHDKGKIEEIVKLLTNMGLIYEGTLPAPKGKIHAKWDNRVQKLFKSTKYGDSQDRPIEKADGSWSYFASDLAYAKDKIDRGANHLIYVLGADHSGYVKRIEAIVKALGKEQIKVDVKICQLVNFIENGVPVKMSKRLGNFASVQDVNHEVGKDIIRFMMLTRQNDKPLDFDLVKVKEQSRENPIFYVQYAHVRTVSILSKAMELMPESYSSFEAGIYDLSLLSSEEEIDIIKLLAAWTKTLEVSAKYFEPHRIALYLINLASKFHSIWNFGKENSDYRFVIENNKELTTARLALAKAIQKVIASGFEVIGVEPMNKM.

Residues 126–136 carry the 'HIGH' region motif; sequence ANPTGPMHIGH.

This sequence belongs to the class-I aminoacyl-tRNA synthetase family. As to quaternary structure, monomer.

It is found in the cytoplasm. It carries out the reaction tRNA(Arg) + L-arginine + ATP = L-arginyl-tRNA(Arg) + AMP + diphosphate. The chain is Arginine--tRNA ligase from Rickettsia canadensis (strain McKiel).